We begin with the raw amino-acid sequence, 316 residues long: Acetaldehyde dehydrogenase (316 aa).

11–14 (SGNI) provides a ligand contact to NAD(+). C131 (acyl-thioester intermediate) is an active-site residue. NAD(+)-binding positions include 162–170 (SAGPGTRAN) and N289.

Belongs to the acetaldehyde dehydrogenase family. Interacts with MhpE.

It carries out the reaction acetaldehyde + NAD(+) + CoA = acetyl-CoA + NADH + H(+). The protein operates within aromatic compound metabolism; 3-phenylpropanoate degradation. Its function is as follows. Catalyzes the conversion of acetaldehyde to acetyl-CoA, using NAD(+) and coenzyme A. Is the final enzyme in the meta-cleavage pathway for the degradation of aromatic compounds. This is Acetaldehyde dehydrogenase from Escherichia coli O157:H7.